The chain runs to 599 residues: Elongation factor 4 (599 aa).

The tr-type G domain occupies 5 to 187; it reads SHIRNFSIIA…RLVQTIPAPT (183 aa). GTP contacts are provided by residues 17 to 22 and 134 to 137; these read DHGKST and NKMD.

It belongs to the TRAFAC class translation factor GTPase superfamily. Classic translation factor GTPase family. LepA subfamily.

The protein resides in the cell inner membrane. The enzyme catalyses GTP + H2O = GDP + phosphate + H(+). Functionally, required for accurate and efficient protein synthesis under certain stress conditions. May act as a fidelity factor of the translation reaction, by catalyzing a one-codon backward translocation of tRNAs on improperly translocated ribosomes. Back-translocation proceeds from a post-translocation (POST) complex to a pre-translocation (PRE) complex, thus giving elongation factor G a second chance to translocate the tRNAs correctly. Binds to ribosomes in a GTP-dependent manner. In Ectopseudomonas mendocina (strain ymp) (Pseudomonas mendocina), this protein is Elongation factor 4.